Consider the following 347-residue polypeptide: N-acetyl-gamma-glutamyl-phosphate reductase (347 aa).

The active site involves Cys151.

This sequence belongs to the NAGSA dehydrogenase family. Type 1 subfamily.

The protein resides in the cytoplasm. It carries out the reaction N-acetyl-L-glutamate 5-semialdehyde + phosphate + NADP(+) = N-acetyl-L-glutamyl 5-phosphate + NADPH + H(+). The protein operates within amino-acid biosynthesis; L-arginine biosynthesis; N(2)-acetyl-L-ornithine from L-glutamate: step 3/4. Functionally, catalyzes the NADPH-dependent reduction of N-acetyl-5-glutamyl phosphate to yield N-acetyl-L-glutamate 5-semialdehyde. In Corynebacterium glutamicum (strain R), this protein is N-acetyl-gamma-glutamyl-phosphate reductase.